Reading from the N-terminus, the 274-residue chain is Diaminopimelate epimerase (274 aa).

Substrate-binding residues include asparagine 11 and asparagine 60. Cysteine 69 serves as the catalytic Proton donor. Substrate contacts are provided by residues 70–71 (GN), asparagine 191, and 209–210 (ER). Cysteine 218 functions as the Proton acceptor in the catalytic mechanism. Residue 219 to 220 (GS) coordinates substrate.

Belongs to the diaminopimelate epimerase family. Homodimer.

The protein localises to the cytoplasm. The enzyme catalyses (2S,6S)-2,6-diaminopimelate = meso-2,6-diaminopimelate. It functions in the pathway amino-acid biosynthesis; L-lysine biosynthesis via DAP pathway; DL-2,6-diaminopimelate from LL-2,6-diaminopimelate: step 1/1. Functionally, catalyzes the stereoinversion of LL-2,6-diaminopimelate (L,L-DAP) to meso-diaminopimelate (meso-DAP), a precursor of L-lysine and an essential component of the bacterial peptidoglycan. In Caldanaerobacter subterraneus subsp. tengcongensis (strain DSM 15242 / JCM 11007 / NBRC 100824 / MB4) (Thermoanaerobacter tengcongensis), this protein is Diaminopimelate epimerase.